The sequence spans 421 residues: AA11 family lytic polysaccharide monooxygenase (421 aa).

Positions 1-19 (MFSKAFLSAALLGAAAVEG) are cleaved as a signal peptide. Cu(+) is bound by residues histidine 20, histidine 79, and glutamate 93. 3 disulfides stabilise this stretch: cysteine 48–cysteine 162, cysteine 84–cysteine 110, and cysteine 201–cysteine 235. N-linked (GlcNAc...) asparagine glycosylation is present at asparagine 117. The tract at residues 231–349 (GSQACTGTPT…SSSSSSSGAL (119 aa)) is disordered. Residues 247-285 (TAGSSGSSGSSSGSSSGGSSSSAAGSGATAPPAPAVSST) show a composition bias toward low complexity. Over residues 304–314 (SPAQPTHTSAP) the composition is skewed to polar residues. Residues 315-349 (SGGSSSGSGSSSGSNSGSSSGSSSSSSSSSSSGAL) show a composition bias toward low complexity.

It belongs to the polysaccharide monooxygenase AA11 family. It depends on Cu(2+) as a cofactor.

Its function is as follows. Lytic polysaccharide monooxygenase (LPMO) that depolymerizes chitin via the oxidation of scissile beta-(1-4)-glycosidic bonds, yielding C1 or C4 oxidation products. Catalysis by LPMOs requires the reduction of the active-site copper from Cu(II) to Cu(I) by a reducing agent and H(2)O(2) or O(2) as a cosubstrate. Active on chitin but has no activity on other substrates, including diverse mannans, cellulose and starch (data not shown). Primary chain cleavage yields predominantly aldonic acid oligosaccharides with even-numbered degrees of polymerization. The sequence is that of AA11 family lytic polysaccharide monooxygenase from Aspergillus oryzae (strain ATCC 42149 / RIB 40) (Yellow koji mold).